We begin with the raw amino-acid sequence, 301 residues long: Coiled-coil domain-containing protein 69-B (301 aa).

The disordered stretch occupies residues 1-43; the sequence is MGSKTSKMCCPQLRKKKRQKAHKEGPSSQELNDLNAKSQGPNE. Glycine 2 carries N-myristoyl glycine lipidation. Positions 26–41 are enriched in polar residues; sequence PSSQELNDLNAKSQGP. Coiled-coil stretches lie at residues 42-167 and 213-281; these read NELL…SILS and KSTM…NLYR.

This sequence belongs to the CCDC69 family.

The protein resides in the cytoplasm. It localises to the cytoskeleton. The protein localises to the spindle. It is found in the midbody. In terms of biological role, may act as a scaffold to regulate the recruitment and assembly of spindle midzone components. The sequence is that of Coiled-coil domain-containing protein 69-B (ccdc69-b) from Xenopus laevis (African clawed frog).